Consider the following 205-residue polypeptide: Hydrogenase-4 component A (205 aa).

4Fe-4S ferredoxin-type domains follow at residues 2-31 (NRFV…TQGL), 41-72 (KTST…SQRD), 73-102 (DAIQ…ASGS), and 140-172 (QTVA…LITG). [4Fe-4S] cluster is bound by residues Cys12, Cys15, Cys18, Cys22, Cys51, Cys54, Cys59, Cys63, Cys82, Cys85, Cys88, Cys92, Cys146, Cys149, Cys158, and Cys162.

[4Fe-4S] cluster serves as cofactor.

Functionally, probable electron transfer protein for hydrogenase 4. The chain is Hydrogenase-4 component A from Escherichia coli (strain K12).